A 367-amino-acid chain; its full sequence is (E)-2-epi-beta-caryophyllene synthase (367 aa).

D93, N234, and S238 together coordinate Mg(2+). The DDXXE motif motif lies at 93–97; it reads DDIAE.

It belongs to the terpene synthase family. The cofactor is Mg(2+). Requires Mn(2+) as cofactor.

It carries out the reaction (2E,6E)-farnesyl diphosphate = (E)-2-epi-beta-caryophyllene + diphosphate. The protein operates within secondary metabolite biosynthesis; terpenoid biosynthesis. Functionally, sesquiterpene synthase converting farnesyl diphosphate to (E)-2-epi-beta-caryophyllene as the major product, and to two other unidentified sesquiterpenes. Has no diterpene synthase activity. The chain is (E)-2-epi-beta-caryophyllene synthase from Selaginella moellendorffii (Spikemoss).